The following is a 228-amino-acid chain: Probable septum site-determining protein MinC (228 aa).

Belongs to the MinC family. As to quaternary structure, interacts with MinD and FtsZ.

Its function is as follows. Cell division inhibitor that blocks the formation of polar Z ring septums. Rapidly oscillates between the poles of the cell to destabilize FtsZ filaments that have formed before they mature into polar Z rings. Prevents FtsZ polymerization. The chain is Probable septum site-determining protein MinC from Yersinia pseudotuberculosis serotype O:1b (strain IP 31758).